Reading from the N-terminus, the 130-residue chain is Small ribosomal subunit protein uS9 (130 aa).

The tract at residues 98-130 (LKRAGLLTRDPRMKERKKPGLKKARRSPQFSKR) is disordered. The segment covering 111–130 (KERKKPGLKKARRSPQFSKR) has biased composition (basic residues).

It belongs to the universal ribosomal protein uS9 family.

The polypeptide is Small ribosomal subunit protein uS9 (rpsI) (Staphylococcus carnosus (strain TM300)).